A 350-amino-acid chain; its full sequence is Leucine-rich repeat-containing protein 23 (350 aa).

A compositionally biased stretch (acidic residues) spans 1-54; it reads MEDETLEDGPEEEEEDEEEGTAEETNQDVTERDEEEEAEKDEEEDKEEEEEAEK. Residues 1–64 form a disordered region; sequence MEDETLEDGP…EEPPPHMPLS (64 aa). 8 LRR repeats span residues 107–128, 129–150, 151–171, 172–193, 196–216, 217–238, 239–260, and 262–283; these read HLRYVDLSQNSLQDLSPLGALT, HLLSLRADHNQLVSVSGLGELP, YLQVASFAQNRIKSLQGFGHP, RLETLNLIGNELRDLEGLECSN, SLHTLELRSNQLLSTAGLNLP, SLRELYLGQNNISRLEGLEALV, NLTTLHLRDNQLESLDGFSEHL, and ALQYLNLRSNMVAKLQEVQKLY. The region spanning 296–334 is the LRRCT domain; that stretch reads NPCEEEEGYRMETLIALPQLERLDKDFFEEEEKREAAET. The stretch at 314 to 344 forms a coiled coil; the sequence is QLERLDKDFFEEEEKREAAETKKAREEEMAE. Residues 325 to 350 form a disordered region; that stretch reads EEEKREAAETKKAREEEMAEPGEKGN.

It is found in the cytoplasm. The protein localises to the cytoskeleton. The protein resides in the flagellum axoneme. The sequence is that of Leucine-rich repeat-containing protein 23 (lrrc23) from Xenopus tropicalis (Western clawed frog).